The chain runs to 70 residues: Mu-agatoxin-Ao1b (70 aa).

A signal peptide spans 1 to 20 (MKAIIFFCFLSVMVFIVAEA). Residues 21–33 (SSLEALKIFEGER) constitute a propeptide that is removed on maturation. Cystine bridges form between Cys35–Cys50, Cys42–Cys55, Cys49–Cys65, and Cys57–Cys63. Asn69 is modified (asparagine amide).

Belongs to the neurotoxin 07 (Beta/delta-agtx) family. 04 (aga-5) subfamily. Expressed by the venom gland.

It is found in the secreted. Its function is as follows. Insecticidal neurotoxin that modulates the insect Nav channel (DmNaV1/tipE (para/tipE)) in a unique manner, with both the activation and inactivation processes being affected. The voltage dependence of activation is shifted toward more hyperpolarized potentials (analogous to site 4 toxins) and a non-inactivating persistent sodium current is induced (site 3-like action). Interestingly, both effects take place in a voltage-dependent manner, producing a bell-shaped curve between -80 and 0 mV. This Agelena orientalis (Funnel-web spider) protein is Mu-agatoxin-Ao1b.